We begin with the raw amino-acid sequence, 155 residues long: uncharacterized protein (155 aa).

Residues 1-17 (MMRGASKRSISSAAVLL) constitute a mitochondrion transit peptide. Residues 111–155 (WHRQQKRSQRRRSVAKYEQREEAARVEKEEREARDREMVRELFRR) are disordered. Over residues 113–124 (RQQKRSQRRRSV) the composition is skewed to basic residues. Basic and acidic residues predominate over residues 125–155 (AKYEQREEAARVEKEEREARDREMVRELFRR).

This sequence belongs to the prokaryotic/mitochondrial release factor family.

It is found in the mitochondrion. This is an uncharacterized protein from Saccharomyces cerevisiae (strain ATCC 204508 / S288c) (Baker's yeast).